A 1116-amino-acid chain; its full sequence is DUB-associated factor 1 (1116 aa).

7 WD repeats span residues 21 to 62, 91 to 132, 160 to 200, 219 to 262, 266 to 305, 387 to 426, and 428 to 466; these read AHIL…NEPE, KNSD…DHDD, VHDG…EKMA, SMSP…EVIR, AHRT…DQTT, KKYG…FSVN, and GGFA…LLNT. The interval 578 to 600 is disordered; that stretch reads LDTGYNSESKKNNKDKKRKSTFK. The residue at position 668 (serine 668) is a Phosphoserine. Residue threonine 693 is modified to Phosphothreonine. A compositionally biased stretch (polar residues) spans 747–776; sequence ISSQDLPSNNTHNKLRSSENSRANSTSTLE. Disordered regions lie at residues 747–784 and 963–994; these read ISSQ…KKPE and FISA…PSTQ. The segment covering 967–987 has biased composition (low complexity); it reads SDTTESSGNDSSDSSLGNGNE.

Interacts (via its WD repeats) with ubiquitin.

The protein localises to the cytoplasm. Its function is as follows. Ubiquitin-binding protein involved in the resistance to phenanthroline, sanguinarine, nordihydroguaiaretic acid (NDGA), isopropyl (N-3-chloro-phenyl)-carbamate (IPCPC) and guanosine 5'-O-(2-thiodiphosphate). The protein is DUB-associated factor 1 of Saccharomyces cerevisiae (strain ATCC 204508 / S288c) (Baker's yeast).